Consider the following 85-residue polypeptide: Dual endothelin-1/VEGF signal peptide receptor (85 aa).

Topologically, residues 1–18 (MTMFKGSNEMKSRWNWGS) are extracellular. A helical transmembrane segment spans residues 19–37 (ITCIICFTCVGSQLSMSSS). The Cytoplasmic segment spans residues 38-85 (KASNFSGPLQLYQRELEIFIVLTDVPNYRLIKENSHLHTTIVDQGRTV).

Post-translationally, N-glycosylated. Expressed in kidney. Expressed in endothelial cells.

It is found in the cell membrane. In terms of biological role, dual receptor for both endothelin-1 and the signal sequence of vascular endothelial growth factor A. Does not act as a receptor for angiotensin-2. Does not bind the VEGFA mature protein. May play a role in angiogenesis with a significant role in cardiovascular and neural development. In Homo sapiens (Human), this protein is Dual endothelin-1/VEGF signal peptide receptor.